The chain runs to 187 residues: Elongation factor P (187 aa).

This sequence belongs to the elongation factor P family.

Its subcellular location is the cytoplasm. It participates in protein biosynthesis; polypeptide chain elongation. Its function is as follows. Involved in peptide bond synthesis. Stimulates efficient translation and peptide-bond synthesis on native or reconstituted 70S ribosomes in vitro. Probably functions indirectly by altering the affinity of the ribosome for aminoacyl-tRNA, thus increasing their reactivity as acceptors for peptidyl transferase. In Synechococcus sp. (strain WH7803), this protein is Elongation factor P.